Reading from the N-terminus, the 89-residue chain is Small ribosomal subunit protein uS15 (89 aa).

Belongs to the universal ribosomal protein uS15 family. Part of the 30S ribosomal subunit. Forms a bridge to the 50S subunit in the 70S ribosome, contacting the 23S rRNA.

One of the primary rRNA binding proteins, it binds directly to 16S rRNA where it helps nucleate assembly of the platform of the 30S subunit by binding and bridging several RNA helices of the 16S rRNA. Its function is as follows. Forms an intersubunit bridge (bridge B4) with the 23S rRNA of the 50S subunit in the ribosome. The sequence is that of Small ribosomal subunit protein uS15 from Burkholderia ambifaria (strain MC40-6).